The sequence spans 151 residues: Cysteine proteinase inhibitor 10 (151 aa).

Positions 1–22 (MATSPMLFLVSLLLVLVAAATG) are cleaved as a signal peptide. Positions 40 to 109 (GGRTEIRDVG…GVAYYLKVAA (70 aa)) constitute a Cystatin domain. The short motif at 96–100 (QVVSG) is the Secondary area of contact element.

It belongs to the cystatin family. Phytocystatin subfamily.

Its subcellular location is the secreted. In terms of biological role, specific inhibitor of cysteine proteinases. Probably involved in the regulation of endogenous processes and in defense against pests and pathogens. This is Cysteine proteinase inhibitor 10 from Oryza sativa subsp. indica (Rice).